The following is a 145-amino-acid chain: Transcription antitermination protein NusB (145 aa).

Belongs to the NusB family.

Functionally, involved in transcription antitermination. Required for transcription of ribosomal RNA (rRNA) genes. Binds specifically to the boxA antiterminator sequence of the ribosomal RNA (rrn) operons. This is Transcription antitermination protein NusB from Geotalea uraniireducens (strain Rf4) (Geobacter uraniireducens).